Here is a 521-residue protein sequence, read N- to C-terminus: Ribonuclease Y (521 aa).

The helical transmembrane segment at Thr5–Val25 threads the bilayer. Residues Lys87–Glu117 form a disordered region. One can recognise a KH domain in the interval Thr211–Leu274. Residues Val337–Ala430 enclose the HD domain.

It belongs to the RNase Y family.

The protein localises to the cell membrane. Endoribonuclease that initiates mRNA decay. In Bacillus mycoides (strain KBAB4) (Bacillus weihenstephanensis), this protein is Ribonuclease Y.